Here is a 259-residue protein sequence, read N- to C-terminus: Protein FAM220A (259 aa).

As to quaternary structure, interacts with transcriptional activator STAT3; the interaction occurs in both the nucleus and the cytoplasm, is enhanced by IL6 and promotes STAT3 dephosphorylation, leading to negative regulation of STAT3 transcriptional activator activity. Can interact with both unphosphorylated and phosphorylated STAT3 but interacts preferentially with phosphorylated STAT3 in the nucleus. Interacts with protein phosphatase PTPN2/TC45; this promotes interaction of PTPN2 with STAT3, leading to dephosphorylation of STAT3 by PTPN2.

The protein resides in the nucleus. The protein localises to the cytoplasm. It localises to the cytoplasmic vesicle. Its subcellular location is the secretory vesicle. It is found in the acrosome. Promotes dephosphorylation of transcriptional activator STAT3 by interacting with both STAT3 and protein phosphatase PTPN2. This promotes interaction of PTPN2 with STAT3 and mediates STAT3 dephosphorylation by PTPN2, leading to negative regulation of STAT3 transcriptional activator activity. May be required for spermiogenesis or sperm function. The polypeptide is Protein FAM220A (FAM220A) (Macaca fascicularis (Crab-eating macaque)).